The sequence spans 240 residues: Phosducin-like protein 2 (240 aa).

The 164-residue stretch at 38-201 (QQEAMVKPYE…LEWKLSEVGA (164 aa)) folds into the Phosducin domain. Residues 89 to 240 (FGELREISGN…DSSGSDTEAK (152 aa)) are thioredoxin fold.

The protein belongs to the phosducin family. As to quaternary structure, interacts with the CCT chaperonin complex and actin. As to expression, testis-specific (at protein level).

The protein resides in the endoplasmic reticulum. Essential for male fertility, spermiogenesis and acrosome formation. The polypeptide is Phosducin-like protein 2 (Pdcl2) (Mus musculus (Mouse)).